Consider the following 239-residue polypeptide: Hexuronic acid methyltransferase AglP (239 aa).

It belongs to the FkbM methyltransferase family.

It localises to the cytoplasm. Its pathway is cell surface structure biogenesis; S-layer biogenesis. Involved in the assembly of a N-linked pentasaccharide that decorates the S-layer glycoprotein and flagellins. S-adenosyl-L-methionine-dependent methyltransferase that modifies the hexuronic acid found at position 4 of the pentasaccharide. The sequence is that of Hexuronic acid methyltransferase AglP (aglP) from Haloferax volcanii (strain ATCC 29605 / DSM 3757 / JCM 8879 / NBRC 14742 / NCIMB 2012 / VKM B-1768 / DS2) (Halobacterium volcanii).